The primary structure comprises 350 residues: N-acetyl-gamma-glutamyl-phosphate reductase (350 aa).

C153 is an active-site residue.

Belongs to the NAGSA dehydrogenase family. Type 1 subfamily.

It localises to the cytoplasm. The enzyme catalyses N-acetyl-L-glutamate 5-semialdehyde + phosphate + NADP(+) = N-acetyl-L-glutamyl 5-phosphate + NADPH + H(+). The protein operates within amino-acid biosynthesis; L-arginine biosynthesis; N(2)-acetyl-L-ornithine from L-glutamate: step 3/4. In terms of biological role, catalyzes the NADPH-dependent reduction of N-acetyl-5-glutamyl phosphate to yield N-acetyl-L-glutamate 5-semialdehyde. This chain is N-acetyl-gamma-glutamyl-phosphate reductase, found in Gloeobacter violaceus (strain ATCC 29082 / PCC 7421).